A 609-amino-acid chain; its full sequence is Spore coat protein homolog 1 (609 aa).

The signal sequence occupies residues 1-17; it reads MKSLLFVVFIFLTTTYA. N-linked (GlcNAc...) asparagine glycosylation is found at asparagine 82, asparagine 397, and asparagine 440. A disordered region spans residues 527–547; the sequence is TVTQVPEAPGTDGTPSESTAW. A lipid anchor (GPI-anchor amidated serine) is attached at serine 584. A propeptide spans 585–609 (removed in mature form); it reads SSSIKRTPCILPLVILASTLFASFF.

The protein localises to the cell membrane. Functionally, may play a role in cell adhesion. The protein is Spore coat protein homolog 1 of Rhizopus delemar (strain RA 99-880 / ATCC MYA-4621 / FGSC 9543 / NRRL 43880) (Mucormycosis agent).